A 469-amino-acid polypeptide reads, in one-letter code: 6-phosphofructo-2-kinase/fructose-2,6-bisphosphatase 4 (469 aa).

Residues 1 to 249 (MASPRELTQN…YYLMNIHVTP (249 aa)) form a 6-phosphofructo-2-kinase region. 46 to 54 (GLPARGKTY) is a binding site for ATP. Positions 79 and 103 each coordinate beta-D-fructose 6-phosphate. The active site involves Asp-129. The beta-D-fructose 6-phosphate site is built by Thr-131 and Arg-137. Residue Cys-159 is part of the active site. Residue 168–173 (NIVQVK) coordinates ATP. Beta-D-fructose 6-phosphate-binding residues include Lys-173, Arg-194, and Tyr-198. The tract at residues 250–469 (RSIYLCRHGE…EALVTVPAHQ (220 aa)) is fructose-2,6-bisphosphatase. Arg-256 provides a ligand contact to beta-D-fructose 2,6-bisphosphate. His-257 serves as the catalytic Tele-phosphohistidine intermediate. The beta-D-fructose 2,6-bisphosphate site is built by Asn-263, Gly-269, and Arg-306. Glu-326 acts as the Proton donor/acceptor in catalysis. The beta-D-fructose 2,6-bisphosphate site is built by Tyr-337, Arg-351, Lys-355, Tyr-366, Gln-392, and Arg-396. 348-351 (FALR) lines the ATP pocket. ATP is bound by residues 392–396 (QAVMR) and Tyr-428. A Phosphothreonine; by PKC modification is found at Thr-444.

This sequence in the C-terminal section; belongs to the phosphoglycerate mutase family. Homodimer.

It carries out the reaction beta-D-fructose 2,6-bisphosphate + H2O = beta-D-fructose 6-phosphate + phosphate. It catalyses the reaction beta-D-fructose 6-phosphate + ATP = beta-D-fructose 2,6-bisphosphate + ADP + H(+). Its activity is regulated as follows. The most important regulatory mechanism of these opposing activities is by phosphorylation and dephosphorylation of the enzyme. Its function is as follows. Synthesis and degradation of fructose 2,6-bisphosphate. This Macaca fascicularis (Crab-eating macaque) protein is 6-phosphofructo-2-kinase/fructose-2,6-bisphosphatase 4 (PFKFB4).